Here is a 562-residue protein sequence, read N- to C-terminus: Protein wntless (562 aa).

The Cytoplasmic portion of the chain corresponds to 1–13 (MSGTILENLSGRK). A helical membrane pass occupies residues 14–34 (LSILVTTLLLCQVLCFLLGGL). Residues 35-239 (YAPLPAGHVT…AIHQNGGFTQ (205 aa)) lie on the Lumenal side of the membrane. N58 is a glycosylation site (N-linked (GlcNAc...) asparagine). Residues 240 to 260 (IWLLLKTVLFPFVVGIMIWFW) traverse the membrane as a helical segment. At 261-270 (RRVHLLQRSP) the chain is on the cytoplasmic side. The chain crosses the membrane as a helical span at residues 271-291 (ALLEYMLIYLGAALTFLNLPL). The Lumenal portion of the chain corresponds to 292-311 (EYLSLVFEMPYMLLLSDIRQ). The helical transmembrane segment at 312–332 (GIFYAMLLTFWLVFAGEHMLI) threads the bilayer. At 333–344 (QDAPNKSTIRSR) the chain is on the cytoplasmic side. Residues 345 to 365 (YWKHLSAVVVGCISLFVFDIC) traverse the membrane as a helical segment. Over 366–390 (ERGVQLRNPFYSIWAMPLAAKMAMT) the chain is Lumenal. The chain crosses the membrane as a helical span at residues 391 to 411 (FIVLAGVSAAIYFLFLCYMIW). Over 412-441 (KVFRNIGDKRTSLPSMSQARRLHYESLIYR) the chain is Cytoplasmic. The helical transmembrane segment at 442-462 (FKFLMLATIVCAALTVTGFIM) threads the bilayer. Over 463–482 (GQRAEGQWDWNDNVAIQPTS) the chain is Lumenal. The chain crosses the membrane as a helical span at residues 483–503 (AFLTGVYGMWNIYIFALLILY). Residues 504-562 (APSHKQWPTMHHSDETTQSNENIVASAASEEIEFSHLPSDSNPSEISSLTSFTRKVAFD) are Cytoplasmic-facing. The interval 539 to 562 (HLPSDSNPSEISSLTSFTRKVAFD) is disordered. Over residues 541 to 556 (PSDSNPSEISSLTSFT) the composition is skewed to polar residues.

Belongs to the wntless family. As to quaternary structure, interacts with wg; in the Golgi. Interacts with Vps35, a component of the retromer complex; wls stability is regulated by Vps35.

The protein resides in the presynaptic cell membrane. It localises to the postsynaptic cell membrane. The protein localises to the cell membrane. Its subcellular location is the endoplasmic reticulum membrane. It is found in the endosome membrane. The protein resides in the golgi apparatus membrane. Functionally, a segment polarity gene required for wingless (wg)-dependent patterning processes, acting in both wg-sending cells and wg-target cells. In non-neuronal cells wls directs wg secretion. The wls traffic loop encompasses the Golgi, the cell surface, an endocytic compartment and a retrograde route leading back to the Golgi, and involves clathrin-mediated endocytosis and the retromer complex (a conserved protein complex consisting of Vps35 and Vps26). In neuronal cells (the larval motorneuron NMJ), the wg signal moves across the synapse via the release of wls-containing exosome-like vesicles. Postsynaptic wls is required for the trafficking of fz2 through the fz2-interacting protein Grip. The sequence is that of Protein wntless from Drosophila erecta (Fruit fly).